Here is a 101-residue protein sequence, read N- to C-terminus: Small ribosomal subunit protein uS14 (101 aa).

The protein belongs to the universal ribosomal protein uS14 family. In terms of assembly, part of the 30S ribosomal subunit. Contacts proteins S3 and S10.

Its function is as follows. Binds 16S rRNA, required for the assembly of 30S particles and may also be responsible for determining the conformation of the 16S rRNA at the A site. The sequence is that of Small ribosomal subunit protein uS14 from Chlamydia caviae (strain ATCC VR-813 / DSM 19441 / 03DC25 / GPIC) (Chlamydophila caviae).